The chain runs to 159 residues: Transcription antitermination protein NusB (159 aa).

The protein belongs to the NusB family.

Functionally, involved in transcription antitermination. Required for transcription of ribosomal RNA (rRNA) genes. Binds specifically to the boxA antiterminator sequence of the ribosomal RNA (rrn) operons. This chain is Transcription antitermination protein NusB, found in Xanthomonas axonopodis pv. citri (strain 306).